The sequence spans 300 residues: Porphobilinogen deaminase (300 aa).

At Cys-241 the chain carries S-(dipyrrolylmethanemethyl)cysteine.

This sequence belongs to the HMBS family. In terms of assembly, monomer. The cofactor is dipyrromethane.

It carries out the reaction 4 porphobilinogen + H2O = hydroxymethylbilane + 4 NH4(+). It functions in the pathway porphyrin-containing compound metabolism; protoporphyrin-IX biosynthesis; coproporphyrinogen-III from 5-aminolevulinate: step 2/4. Tetrapolymerization of the monopyrrole PBG into the hydroxymethylbilane pre-uroporphyrinogen in several discrete steps. The chain is Porphobilinogen deaminase from Sorangium cellulosum (strain So ce56) (Polyangium cellulosum (strain So ce56)).